Reading from the N-terminus, the 180-residue chain is Regulator of G-protein signaling 8 (180 aa).

Serine 26 bears the Phosphoserine mark. Residues 56-171 (SFDVLLSHKY…FLRSKMYLDL (116 aa)) form the RGS domain.

In terms of assembly, interacts with GNAO1 and GNAI3. Expressed at high levels in brain. Very little expression detected in other tissues. Detected in Purkinje cells in the cerebellum.

Its subcellular location is the cell membrane. The protein resides in the membrane. It localises to the perikaryon. The protein localises to the cell projection. It is found in the dendrite. Its subcellular location is the nucleus. Regulates G protein-coupled receptor signaling cascades, including signaling via muscarinic acetylcholine receptor CHRM2 and dopamine receptor DRD2. Inhibits signal transduction by increasing the GTPase activity of G protein alpha subunits, thereby driving them into their inactive GDP-bound form. Modulates the activity of potassium channels that are activated in response to DRD2 and CHRM2 signaling. This is Regulator of G-protein signaling 8 (Rgs8) from Rattus norvegicus (Rat).